Here is a 340-residue protein sequence, read N- to C-terminus: MIRDEISVSTQTPRWRCIGSGADSKRLHYGRFALSPLRKGQASTIGIAMRRALLGEIEGTCITHAKLEKVTHEYSAIIGIEESVHDILINLKEIVLRSDPYGTREASICIVGPRNVTAQDIILPPSVRIIDATQHIASLTKSITFDIRLWIEKDRGYRIQSPKNYQDGIFPIDAVFMPVRNANYSIHSYGNGNDIQEILFLEIWTNGSLAPREALYRASRNLIDLFIPFLRAEEQNIDGMDNQNGSNMPSFSFSNISADMERMEEEVAFKHIFIDQSELPPRVYNCLGRVNIHTLSDLLNYSQEDLMRIGHFGKKSVEQVSEVLQKHFAVDLPKNKFQIH.

Residues 1 to 233 (MIRDEISVST…DLFIPFLRAE (233 aa)) form an alpha N-terminal domain (alpha-NTD) region. The segment at 268 to 340 (AFKHIFIDQS…DLPKNKFQIH (73 aa)) is alpha C-terminal domain (alpha-CTD).

This sequence belongs to the RNA polymerase alpha chain family. In plastids the minimal PEP RNA polymerase catalytic core is composed of four subunits: alpha, beta, beta', and beta''. When a (nuclear-encoded) sigma factor is associated with the core the holoenzyme is formed, which can initiate transcription.

Its subcellular location is the plastid. The protein resides in the chloroplast. The enzyme catalyses RNA(n) + a ribonucleoside 5'-triphosphate = RNA(n+1) + diphosphate. Its function is as follows. DNA-dependent RNA polymerase catalyzes the transcription of DNA into RNA using the four ribonucleoside triphosphates as substrates. The polypeptide is DNA-directed RNA polymerase subunit alpha (Cycas taitungensis (Prince sago)).